The primary structure comprises 72 residues: ATP-dependent Clp protease ATP-binding subunit ClpA homolog (72 aa).

It belongs to the ClpA/ClpB family.

The protein resides in the plastid. Its subcellular location is the chloroplast. May interact with a ClpP-like protease involved in degradation of denatured proteins in the chloroplast. This chain is ATP-dependent Clp protease ATP-binding subunit ClpA homolog, found in Populus euphratica (Euphrates poplar).